The primary structure comprises 207 residues: Ribonuclease HII (207 aa).

Residues 12–205 enclose the RNase H type-2 domain; sequence GLVVGIDEVG…IRNMIEAEAH (194 aa). A divalent metal cation is bound by residues Asp-18, Glu-19, and Asp-114.

Belongs to the RNase HII family. The cofactor is Mn(2+). Requires Mg(2+) as cofactor.

The protein resides in the cytoplasm. The enzyme catalyses Endonucleolytic cleavage to 5'-phosphomonoester.. Its function is as follows. Endonuclease that specifically degrades the RNA of RNA-DNA hybrids. The polypeptide is Ribonuclease HII (Gluconobacter oxydans (strain 621H) (Gluconobacter suboxydans)).